The chain runs to 901 residues: Viral-enhancing factor (901 aa).

One can recognise a Peptidase M60 domain in the interval 27-330 (HRRTEVGVVL…IFTWLYNPQR (304 aa)). N-linked (GlcNAc...) asparagine; by host glycans are attached at residues Asn65, Asn265, Asn339, Asn349, Asn540, Asn594, Asn595, Asn642, Asn683, and Asn698.

Functionally, involved in disruption of the peritrophic membrane and fusion of nucleocapsids with midgut cells. The polypeptide is Viral-enhancing factor (VEF) (Trichoplusia ni (Cabbage looper)).